A 95-amino-acid chain; its full sequence is UPF0235 protein MS0322 (95 aa).

The protein belongs to the UPF0235 family.

This Mannheimia succiniciproducens (strain KCTC 0769BP / MBEL55E) protein is UPF0235 protein MS0322.